We begin with the raw amino-acid sequence, 174 residues long: NADH-ubiquinone oxidoreductase chain 6 (174 aa).

The next 6 membrane-spanning stretches (helical) occupy residues 1 to 21 (MTYA…GFSS), 24 to 44 (SPIY…AVIL), 47 to 67 (GGGY…MVVF), 86 to 106 (AEVL…VLWV), 111 to 131 (GVVV…EGEG), and 151 to 171 (WLVV…IEIA).

The protein belongs to the complex I subunit 6 family. Core subunit of respiratory chain NADH dehydrogenase (Complex I) which is composed of 45 different subunits.

It is found in the mitochondrion inner membrane. It catalyses the reaction a ubiquinone + NADH + 5 H(+)(in) = a ubiquinol + NAD(+) + 4 H(+)(out). In terms of biological role, core subunit of the mitochondrial membrane respiratory chain NADH dehydrogenase (Complex I) which catalyzes electron transfer from NADH through the respiratory chain, using ubiquinone as an electron acceptor. Essential for the catalytic activity and assembly of complex I. This is NADH-ubiquinone oxidoreductase chain 6 (MT-ND6) from Pongo pygmaeus (Bornean orangutan).